The primary structure comprises 430 residues: Adenylosuccinate synthetase (430 aa).

GTP is bound by residues Gly12–Lys18 and Gly40–Thr42. The Proton acceptor role is filled by Asp13. Positions 13 and 40 each coordinate Mg(2+). IMP contacts are provided by residues Asp13–Lys16, Asn38–His41, Thr129, Arg143, Gln224, Thr239, and Arg303. His41 acts as the Proton donor in catalysis. A substrate-binding site is contributed by Thr299 to Arg305. Residues Arg305, Lys331–Asp333, and Ser413–Gly415 contribute to the GTP site.

The protein belongs to the adenylosuccinate synthetase family. In terms of assembly, homodimer. Mg(2+) serves as cofactor.

Its subcellular location is the cytoplasm. The catalysed reaction is IMP + L-aspartate + GTP = N(6)-(1,2-dicarboxyethyl)-AMP + GDP + phosphate + 2 H(+). Its pathway is purine metabolism; AMP biosynthesis via de novo pathway; AMP from IMP: step 1/2. Its function is as follows. Plays an important role in the de novo pathway of purine nucleotide biosynthesis. Catalyzes the first committed step in the biosynthesis of AMP from IMP. The sequence is that of Adenylosuccinate synthetase from Ehrlichia ruminantium (strain Welgevonden).